The following is a 180-amino-acid chain: Beta-lactoglobulin-1 (180 aa).

The signal sequence occupies residues 1–18 (MKCLLLALGLALMCGIQA). Cystine bridges form between C84/C178 and C124/C137.

This sequence belongs to the calycin superfamily. Lipocalin family. As to quaternary structure, monomer.

It localises to the secreted. Its function is as follows. Lactoglobulin is the primary component of whey, it binds retinol and is probably involved in the transport of that molecule. In Equus caballus (Horse), this protein is Beta-lactoglobulin-1 (LGB1).